A 500-amino-acid polypeptide reads, in one-letter code: MAKMGKYGLGFKWAPEFPWMLPNASEKLGNPERSEEDGFCPSAAQEPKVKGKTLVNHVRVDCSRLPALECCVQSAIIRDIFVDEDPQKVEASTMMALQFGSAVLVKPSKRLSVQAWAKLGVLPKTPAMGLFKRFCLCNTRECVCDAHVAFQLFTVQPDGVCLGNGRFIGWFVPVTAIPEYAKQWLQPWSILLRKGGNKGSVTSGHSRRAVTMPVYDFNATDVVYADENQDDDADDPVVLVADTQEEDGVAKEQVDSADSEICVAHTVGQEMTEPDAVGSQTPIASAEETEVGEACDREGIAEVKATVCADALDACPDQVEAFDIEKVEDSILSELQTELNAPADKTYEDVLAFDAIYSETLSAFYAVPSDETHFKVCGFYSPAIERTNCWLRSTLIVMQSLPLEFKDLGMQKLWLSYKAGYDQCFVDKLVKSAPKSIILPQGGYVADFAYFFLSQCSFKVHANWRCLKCGMELKLQGLDAVFFYGDVVSHMCKCSFKAYF.

The 143-residue stretch at 54-196 folds into the CoV Nsp1 globular domain; sequence LVNHVRVDCS…PWSILLRKGG (143 aa). The region spanning 352–500 is the Peptidase C16 domain; that stretch reads AFDAIYSETL…MCKCSFKAYF (149 aa). Catalysis depends on Cys389, which acts as the For PL1-PRO activity. Residues 466-494 form a C4-type zinc finger; sequence CLKCGMELKLQGLDAVFFYGDVVSHMCKC.

The protein belongs to the coronaviruses polyprotein 1ab family.

Its function is as follows. The replicase polyprotein of coronaviruses is a multifunctional protein: it contains the activities necessary for the transcription of negative stranded RNA, leader RNA, subgenomic mRNAs and progeny virion RNA as well as proteinases responsible for the cleavage of the polyprotein into functional products. The papain-like proteinase 1 (PL1-PRO) is responsible for the cleavages located at the N-terminus of the replicase polyprotein. Activity of PL1-PRO is strongly dependent on zinc. Functionally, non-structural protein 1: binds to the 40S ribosomal subunit and inhibits host translation. The nsp1-40S ribosome complex further induces an endonucleolytic cleavage near the 5'UTR of host mRNAs, targeting them for degradation. By suppressing host gene expression, nsp1 facilitates efficient viral gene expression in infected cells and evasion from host immune response. The protein is Replicase polyprotein 1ab (rep) of Mus musculus (Mouse).